Consider the following 410-residue polypeptide: MTINATVKEAGFRPASRISSIGVSEILKIGARAAAMKREGKPVIILGAGEPDFDTPDHVKQAASDAIHRGETKYTALDGTPELKKAIREKFQRENGLAYELDEITVATGAKQILFNAMMASLDPGDEVVIPTPYWTSYSDIVQICEGKPILIACDASSGFRLTAQKLEAAITPRTRWVLLNSPSNPSGAAYSAADYRPLLDVLLKHPHVWLLVDDMYEHIVYDAFRFVTPARLEPGLKDRTLTVNGVSKAYAMTGWRIGYAGGPRALIKAMAVVQSQATSCPSSVSQAASVAALNGPQDFLKERTESFQRRRNLVVNGLNAIEGLDCRVPEGAFYTFSGCAGVARRVTPSGKRIESDTDFCAYLLEDSHVAVVPGSAFGLSPYFRISYATSEAELKEALERISAACKRLS.

L-aspartate-binding residues include Gly-47, Trp-135, and Asn-185. Lys-249 is subject to N6-(pyridoxal phosphate)lysine. Residue Arg-385 participates in L-aspartate binding.

This sequence belongs to the class-I pyridoxal-phosphate-dependent aminotransferase family. In terms of assembly, homodimer. It depends on pyridoxal 5'-phosphate as a cofactor.

It is found in the cytoplasm. It carries out the reaction L-aspartate + 2-oxoglutarate = oxaloacetate + L-glutamate. Catalyzes the reversible conversion of aspartate and 2-oxoglutarate to glutamate and oxaloacetate. This is Aspartate aminotransferase from Rhizobium meliloti (Ensifer meliloti).